Reading from the N-terminus, the 342-residue chain is S-adenosylmethionine:tRNA ribosyltransferase-isomerase (342 aa).

Belongs to the QueA family. Monomer.

It localises to the cytoplasm. The enzyme catalyses 7-aminomethyl-7-carbaguanosine(34) in tRNA + S-adenosyl-L-methionine = epoxyqueuosine(34) in tRNA + adenine + L-methionine + 2 H(+). It participates in tRNA modification; tRNA-queuosine biosynthesis. In terms of biological role, transfers and isomerizes the ribose moiety from AdoMet to the 7-aminomethyl group of 7-deazaguanine (preQ1-tRNA) to give epoxyqueuosine (oQ-tRNA). The sequence is that of S-adenosylmethionine:tRNA ribosyltransferase-isomerase from Shouchella clausii (strain KSM-K16) (Alkalihalobacillus clausii).